A 385-amino-acid chain; its full sequence is Cytochrome b (385 aa).

4 consecutive transmembrane segments (helical) span residues 34 to 54, 78 to 99, 114 to 134, and 179 to 199; these read FGSI…ILTM, WFIR…FIHI, WYSG…GYVL, and FLVL…THLL. Heme b is bound by residues His-84 and His-98. Heme b is bound by residues His-183 and His-197. His-202 is an a ubiquinone binding site. Helical transmembrane passes span 227–247, 289–309, 321–341, and 348–368; these read FKDI…STLF, LMGV…PFLI, FMQF…WLGA, and YTIM…FLFP.

The protein belongs to the cytochrome b family. The cytochrome bc1 complex contains 3 respiratory subunits (MT-CYB, CYC1 and UQCRFS1), 2 core proteins (UQCRC1 and UQCRC2) and probably 6 low-molecular weight proteins. The cofactor is heme b.

The protein resides in the mitochondrion inner membrane. In terms of biological role, component of the ubiquinol-cytochrome c reductase complex (complex III or cytochrome b-c1 complex) that is part of the mitochondrial respiratory chain. The b-c1 complex mediates electron transfer from ubiquinol to cytochrome c. Contributes to the generation of a proton gradient across the mitochondrial membrane that is then used for ATP synthesis. This is Cytochrome b (MT-CYB) from Myxine glutinosa (Atlantic hagfish).